The following is a 171-amino-acid chain: S-ribosylhomocysteine lyase (171 aa).

Fe cation contacts are provided by His54, His58, and Cys128.

The protein belongs to the LuxS family. As to quaternary structure, homodimer. Fe cation serves as cofactor.

It catalyses the reaction S-(5-deoxy-D-ribos-5-yl)-L-homocysteine = (S)-4,5-dihydroxypentane-2,3-dione + L-homocysteine. Its function is as follows. Involved in the synthesis of autoinducer 2 (AI-2) which is secreted by bacteria and is used to communicate both the cell density and the metabolic potential of the environment. The regulation of gene expression in response to changes in cell density is called quorum sensing. Catalyzes the transformation of S-ribosylhomocysteine (RHC) to homocysteine (HC) and 4,5-dihydroxy-2,3-pentadione (DPD). The sequence is that of S-ribosylhomocysteine lyase from Cronobacter sakazakii (strain ATCC BAA-894) (Enterobacter sakazakii).